A 439-amino-acid chain; its full sequence is Dolichyl-diphosphooligosaccharide--protein glycosyltransferase 48 kDa subunit (439 aa).

The signal sequence occupies residues 1–26 (MEPSTAARAWALFWLLPPLLGAVCAS). Topologically, residues 27 to 410 (GPRTLVLLDN…YERFIPSAYP (384 aa)) are lumenal. Residues 411 to 430 (YYASAFSMMLGLFIFSIVFL) form a helical membrane-spanning segment. Over 431 to 439 (HMKEKEKSD) the chain is Cytoplasmic.

It belongs to the DDOST 48 kDa subunit family. In terms of assembly, component of the oligosaccharyltransferase (OST) complex. OST exists in two different complex forms which contain common core subunits RPN1, RPN2, OST48, OST4, DAD1 and TMEM258, either STT3A or STT3B as catalytic subunits, and form-specific accessory subunits. STT3A complex assembly occurs through the formation of 3 subcomplexes. Subcomplex 1 contains RPN1 and TMEM258, subcomplex 2 contains the STT3A-specific subunits STT3A, DC2/OSTC, and KCP2 as well as the core subunit OST4, and subcomplex 3 contains RPN2, DAD1, and OST48. The STT3A complex can form stable complexes with the Sec61 complex or with both the Sec61 and TRAP complexes. Interacts with SMIM22.

Its subcellular location is the endoplasmic reticulum membrane. The protein operates within protein modification; protein glycosylation. In terms of biological role, subunit of the oligosaccharyl transferase (OST) complex that catalyzes the initial transfer of a defined glycan (Glc(3)Man(9)GlcNAc(2) in eukaryotes) from the lipid carrier dolichol-pyrophosphate to an asparagine residue within an Asn-X-Ser/Thr consensus motif in nascent polypeptide chains, the first step in protein N-glycosylation. N-glycosylation occurs cotranslationally and the complex associates with the Sec61 complex at the channel-forming translocon complex that mediates protein translocation across the endoplasmic reticulum (ER). All subunits are required for a maximal enzyme activity. Required for the assembly of both SST3A- and SS3B-containing OST complexes. The chain is Dolichyl-diphosphooligosaccharide--protein glycosyltransferase 48 kDa subunit from Pongo abelii (Sumatran orangutan).